Reading from the N-terminus, the 416-residue chain is Serine hydroxymethyltransferase 1 (416 aa).

(6S)-5,6,7,8-tetrahydrofolate is bound by residues leucine 121 and 125 to 127 (GHL). At lysine 229 the chain carries N6-(pyridoxal phosphate)lysine. Residues glutamate 245 and 354-356 (SPF) each bind (6S)-5,6,7,8-tetrahydrofolate.

The protein belongs to the SHMT family. In terms of assembly, homodimer. Pyridoxal 5'-phosphate serves as cofactor.

Its subcellular location is the cytoplasm. It catalyses the reaction (6R)-5,10-methylene-5,6,7,8-tetrahydrofolate + glycine + H2O = (6S)-5,6,7,8-tetrahydrofolate + L-serine. It participates in one-carbon metabolism; tetrahydrofolate interconversion. Its pathway is amino-acid biosynthesis; glycine biosynthesis; glycine from L-serine: step 1/1. Its function is as follows. Catalyzes the reversible interconversion of serine and glycine with tetrahydrofolate (THF) serving as the one-carbon carrier. This reaction serves as the major source of one-carbon groups required for the biosynthesis of purines, thymidylate, methionine, and other important biomolecules. Also exhibits THF-independent aldolase activity toward beta-hydroxyamino acids, producing glycine and aldehydes, via a retro-aldol mechanism. The sequence is that of Serine hydroxymethyltransferase 1 from Photobacterium profundum (strain SS9).